The sequence spans 428 residues: Histidine--tRNA ligase (428 aa).

Belongs to the class-II aminoacyl-tRNA synthetase family. Homodimer.

It localises to the cytoplasm. The catalysed reaction is tRNA(His) + L-histidine + ATP = L-histidyl-tRNA(His) + AMP + diphosphate + H(+). The chain is Histidine--tRNA ligase from Ectopseudomonas mendocina (strain ymp) (Pseudomonas mendocina).